Consider the following 67-residue polypeptide: Large ribosomal subunit protein uL29 (67 aa).

The protein belongs to the universal ribosomal protein uL29 family.

This is Large ribosomal subunit protein uL29 from Methanosarcina acetivorans (strain ATCC 35395 / DSM 2834 / JCM 12185 / C2A).